The chain runs to 312 residues: Olfactory receptor 51B6 (312 aa).

Topologically, residues 1–23 (MGLNKSASTFQLTGFPGMEKAHH) are extracellular. An N-linked (GlcNAc...) asparagine glycan is attached at Asn4. The helical transmembrane segment at 24–44 (WIFIPLLAAYISILLGNGTLL) threads the bilayer. Residues 45-52 (FLIRNDHN) are Cytoplasmic-facing. The chain crosses the membrane as a helical span at residues 53 to 73 (LHEPMYYFLAMLAATDLGVTL). The Extracellular portion of the chain corresponds to 74–97 (TTMPTVLGVLWLDHREIGHGACFS). A disulfide bridge links Cys95 with Cys187. Residues 98 to 118 (QAYFIHTLSVMESGVLLAMAY) form a helical membrane-spanning segment. Residues 119–137 (DCFITIRSPLRYTSILTNT) are Cytoplasmic-facing. Residues 138 to 158 (QVMKIGVRVLTRAGLSIMPIV) traverse the membrane as a helical segment. Over 159–194 (VRLHWFPYCRSHVLSHAFCLHQDVIKLACADITFNR) the chain is Extracellular. A helical membrane pass occupies residues 195–215 (LYPVVVLFAMVLLDFLIIFFS). The Cytoplasmic portion of the chain corresponds to 216-235 (YILILKTVMGIGSGGERAKA). The helical transmembrane segment at 236–256 (LNTCVSHICCILVFYVTVVCL) threads the bilayer. Residues 257-271 (TFIHRFGKHVPHVVH) lie on the Extracellular side of the membrane. The helical transmembrane segment at 272–292 (ITMSYIHFLFPPFMNPFIYSI) threads the bilayer. At 293–312 (KTKQIQSGILRLFSLPHSRA) the chain is on the cytoplasmic side.

This sequence belongs to the G-protein coupled receptor 1 family.

It is found in the cell membrane. Its function is as follows. Odorant receptor. The protein is Olfactory receptor 51B6 (OR51B6) of Homo sapiens (Human).